The primary structure comprises 641 residues: 1-deoxy-D-xylulose-5-phosphate synthase (641 aa).

Thiamine diphosphate contacts are provided by residues His71 and 112–114; that span reads SHA. Asp144 provides a ligand contact to Mg(2+). Residues 145–146, Asn173, Tyr284, and Glu365 each bind thiamine diphosphate; that span reads GA. Position 173 (Asn173) interacts with Mg(2+).

It belongs to the transketolase family. DXPS subfamily. As to quaternary structure, homodimer. The cofactor is Mg(2+). Thiamine diphosphate is required as a cofactor.

It catalyses the reaction D-glyceraldehyde 3-phosphate + pyruvate + H(+) = 1-deoxy-D-xylulose 5-phosphate + CO2. It participates in metabolic intermediate biosynthesis; 1-deoxy-D-xylulose 5-phosphate biosynthesis; 1-deoxy-D-xylulose 5-phosphate from D-glyceraldehyde 3-phosphate and pyruvate: step 1/1. Functionally, catalyzes the acyloin condensation reaction between C atoms 2 and 3 of pyruvate and glyceraldehyde 3-phosphate to yield 1-deoxy-D-xylulose-5-phosphate (DXP). In Mycolicibacterium paratuberculosis (strain ATCC BAA-968 / K-10) (Mycobacterium paratuberculosis), this protein is 1-deoxy-D-xylulose-5-phosphate synthase.